We begin with the raw amino-acid sequence, 350 residues long: tRNA uridine(34) hydroxylase (350 aa).

Positions 146–240 (DDPDALFIDM…YARKAREQGL (95 aa)) constitute a Rhodanese domain. C200 acts as the Cysteine persulfide intermediate in catalysis.

It belongs to the TrhO family.

It carries out the reaction uridine(34) in tRNA + AH2 + O2 = 5-hydroxyuridine(34) in tRNA + A + H2O. In terms of biological role, catalyzes oxygen-dependent 5-hydroxyuridine (ho5U) modification at position 34 in tRNAs, the first step in 5-carboxymethoxyuridine (cmo5U) biosynthesis. May be part of an alternate pathway, which is able to bypass cmo5U biogenesis in a subset of tRNAs under aerobic conditions. The sequence is that of tRNA uridine(34) hydroxylase from Escherichia coli O45:K1 (strain S88 / ExPEC).